The chain runs to 480 residues: Glycogen synthase (480 aa).

Lysine 15 serves as a coordination point for ADP-alpha-D-glucose.

It belongs to the glycosyltransferase 1 family. Bacterial/plant glycogen synthase subfamily.

The catalysed reaction is [(1-&gt;4)-alpha-D-glucosyl](n) + ADP-alpha-D-glucose = [(1-&gt;4)-alpha-D-glucosyl](n+1) + ADP + H(+). The protein operates within glycan biosynthesis; glycogen biosynthesis. In terms of biological role, synthesizes alpha-1,4-glucan chains using ADP-glucose. This is Glycogen synthase from Desulforamulus reducens (strain ATCC BAA-1160 / DSM 100696 / MI-1) (Desulfotomaculum reducens).